The following is a 1798-amino-acid chain: U3 small nucleolar RNA-associated protein 10 (1798 aa).

The HEAT 1 repeat unit spans residues 583–620 (LDFQALLPFLLVTLTDPSERVRREAAAALAAVGSLYKK). 2 helical membrane-spanning segments follow: residues 942–962 (IQSG…AIVN) and 998–1018 (ALLL…HSVM). 4 HEAT repeats span residues 1042 to 1079 (QTID…AFEH), 1249 to 1286 (LTLV…QNPE), 1293 to 1331 (IRVL…KYGK), and 1754 to 1791 (ALLP…VLGE).

Belongs to the HEATR1/UTP10 family. In terms of assembly, component of the ribosomal small subunit (SSU) processome.

Its subcellular location is the nucleus. It localises to the nucleolus. The protein localises to the membrane. Its function is as follows. Involved in nucleolar processing of pre-18S ribosomal RNA. Involved in ribosome biosynthesis. This Aspergillus fumigatus (strain ATCC MYA-4609 / CBS 101355 / FGSC A1100 / Af293) (Neosartorya fumigata) protein is U3 small nucleolar RNA-associated protein 10.